The sequence spans 186 residues: TATA-box-binding protein 2 (186 aa).

Tandem repeats lie at residues 10-86 (IQNV…FDKL) and 101-179 (VQNI…VERI). Glycyl lysine isopeptide (Lys-Gly) (interchain with G-Cter in SAMP2) cross-links involve residues Lys-53 and Lys-63.

It belongs to the TBP family.

Its function is as follows. General factor that plays a role in the activation of archaeal genes transcribed by RNA polymerase. Binds specifically to the TATA box promoter element which lies close to the position of transcription initiation. The sequence is that of TATA-box-binding protein 2 (tbp2) from Haloferax volcanii (strain ATCC 29605 / DSM 3757 / JCM 8879 / NBRC 14742 / NCIMB 2012 / VKM B-1768 / DS2) (Halobacterium volcanii).